A 54-amino-acid chain; its full sequence is U-reduvitoxin-Pr1a (54 aa).

The signal sequence occupies residues 1–19 (MKLLGLLLLVFTFMALAFA). Cystine bridges form between Cys-24-Cys-39, Cys-31-Cys-44, and Cys-38-Cys-51.

The protein belongs to the venom Ptu1-like knottin family. Expressed by the venom gland (posterior main gland) (at protein level).

It is found in the secreted. In terms of biological role, binds reversibly and blocks P/Q-type voltage-gated calcium channels (Cav). The chain is U-reduvitoxin-Pr1a from Platymeris rhadamanthus (Red spot assassin bug).